The sequence spans 113 residues: uncharacterized protein (113 aa).

Disordered regions lie at residues 1-22 (MGEHAIKRHMRQRKPTKHPLAQ) and 90-113 (DGRHTTESSFEHSSPSRSPQSDDL). A compositionally biased stretch (basic and acidic residues) spans 90–99 (DGRHTTESSF). Low complexity predominate over residues 100–113 (EHSSPSRSPQSDDL).

This is an uncharacterized protein from Mycobacterium tuberculosis (strain CDC 1551 / Oshkosh).